Here is a 432-residue protein sequence, read N- to C-terminus: Gamma-glutamyl phosphate reductase (432 aa).

The protein belongs to the gamma-glutamyl phosphate reductase family.

The protein localises to the cytoplasm. It carries out the reaction L-glutamate 5-semialdehyde + phosphate + NADP(+) = L-glutamyl 5-phosphate + NADPH + H(+). It functions in the pathway amino-acid biosynthesis; L-proline biosynthesis; L-glutamate 5-semialdehyde from L-glutamate: step 2/2. Catalyzes the NADPH-dependent reduction of L-glutamate 5-phosphate into L-glutamate 5-semialdehyde and phosphate. The product spontaneously undergoes cyclization to form 1-pyrroline-5-carboxylate. This is Gamma-glutamyl phosphate reductase from Corynebacterium glutamicum (strain R).